The primary structure comprises 116 residues: Aspartate 1-decarboxylase (116 aa).

Catalysis depends on Ser-25, which acts as the Schiff-base intermediate with substrate; via pyruvic acid. Residue Ser-25 is modified to Pyruvic acid (Ser). Thr-57 lines the substrate pocket. The active-site Proton donor is Tyr-58. 73–75 (GAA) is a substrate binding site.

The protein belongs to the PanD family. Heterooctamer of four alpha and four beta subunits. The cofactor is pyruvate. Post-translationally, is synthesized initially as an inactive proenzyme, which is activated by self-cleavage at a specific serine bond to produce a beta-subunit with a hydroxyl group at its C-terminus and an alpha-subunit with a pyruvoyl group at its N-terminus.

It is found in the cytoplasm. The enzyme catalyses L-aspartate + H(+) = beta-alanine + CO2. It participates in cofactor biosynthesis; (R)-pantothenate biosynthesis; beta-alanine from L-aspartate: step 1/1. Catalyzes the pyruvoyl-dependent decarboxylation of aspartate to produce beta-alanine. This chain is Aspartate 1-decarboxylase, found in Christiangramia forsetii (strain DSM 17595 / CGMCC 1.15422 / KT0803) (Gramella forsetii).